The following is a 100-amino-acid chain: uncharacterized protein (100 aa).

It belongs to the ycf15 family.

It is found in the plastid. Its subcellular location is the chloroplast. This is an uncharacterized protein from Panax ginseng (Korean ginseng).